The following is a 191-amino-acid chain: RRP15-like protein (191 aa).

The segment covering 1-11 has biased composition (basic and acidic residues); sequence MSTKNRDRLVV. The interval 1-52 is disordered; the sequence is MSTKNRDRLVVTEDSDDDNEREEMSSGGESGEEGPSSVDGGAGDADETVAFP. Residues 53-84 adopt a coiled-coil conformation; that stretch reads AIERRKKKVIKKLTKKEQSLKKSVKEYRIKLA. Positions 119-153 are enriched in basic and acidic residues; that stretch reads QKTMSDAVKEKMTARERREARQRFDGKNFDSDRFA. Positions 119–191 are disordered; that stretch reads QKTMSDAVKE…IDTGNYSDED (73 aa). Residues 166 to 191 are compositionally biased toward acidic residues; that stretch reads GEDDDGEDQMDIGEEQIDTGNYSDED.

The protein belongs to the RRP15 family.

The protein is RRP15-like protein of Caenorhabditis elegans.